A 291-amino-acid polypeptide reads, in one-letter code: Methionine aminopeptidase (291 aa).

His65 contacts substrate. A divalent metal cation-binding residues include Asp85, Asp96, and His155. Residue His163 coordinates substrate. The a divalent metal cation site is built by Glu188 and Glu276.

Belongs to the peptidase M24A family. Methionine aminopeptidase archaeal type 2 subfamily. As to quaternary structure, monomer. The cofactor is Co(2+). Zn(2+) is required as a cofactor. Mn(2+) serves as cofactor. It depends on Fe(2+) as a cofactor.

The enzyme catalyses Release of N-terminal amino acids, preferentially methionine, from peptides and arylamides.. Removes the N-terminal methionine from nascent proteins. The N-terminal methionine is often cleaved when the second residue in the primary sequence is small and uncharged (Met-Ala-, Cys, Gly, Pro, Ser, Thr, or Val). The chain is Methionine aminopeptidase from Archaeoglobus fulgidus (strain ATCC 49558 / DSM 4304 / JCM 9628 / NBRC 100126 / VC-16).